The sequence spans 105 residues: Small ribosomal subunit protein uS10 (105 aa).

This sequence belongs to the universal ribosomal protein uS10 family. As to quaternary structure, part of the 30S ribosomal subunit.

Functionally, involved in the binding of tRNA to the ribosomes. This is Small ribosomal subunit protein uS10 from Desulfovibrio desulfuricans (strain ATCC 27774 / DSM 6949 / MB).